Consider the following 332-residue polypeptide: HPr kinase/phosphorylase (332 aa).

Residues H153 and K174 contribute to the active site. ATP is bound at residue 168 to 175 (GKSGLGKS). S175 is a Mg(2+) binding site. The Proton acceptor; for phosphorylation activity. Proton donor; for dephosphorylation activity role is filled by D192. The important for the catalytic mechanism of both phosphorylation and dephosphorylation stretch occupies residues 217–226 (MEIRGLGVVD). E218 lines the Mg(2+) pocket. The active site involves R259. The important for the catalytic mechanism of dephosphorylation stretch occupies residues 280 to 285 (PIFPGK).

This sequence belongs to the HPrK/P family. In terms of assembly, homohexamer. Requires Mg(2+) as cofactor.

It carries out the reaction [HPr protein]-L-serine + ATP = [HPr protein]-O-phospho-L-serine + ADP + H(+). The enzyme catalyses [HPr protein]-O-phospho-L-serine + phosphate + H(+) = [HPr protein]-L-serine + diphosphate. In terms of biological role, catalyzes the ATP- as well as the pyrophosphate-dependent phosphorylation of a specific serine residue in HPr, a phosphocarrier protein of the phosphoenolpyruvate-dependent sugar phosphotransferase system (PTS). HprK/P also catalyzes the pyrophosphate-producing, inorganic phosphate-dependent dephosphorylation (phosphorolysis) of seryl-phosphorylated HPr (P-Ser-HPr). In Chlorobium phaeovibrioides (strain DSM 265 / 1930) (Prosthecochloris vibrioformis (strain DSM 265)), this protein is HPr kinase/phosphorylase.